The primary structure comprises 228 residues: Cytidylate kinase (228 aa).

Position 17–25 (17–25 (GPTASGKGT)) interacts with ATP.

This sequence belongs to the cytidylate kinase family. Type 1 subfamily.

It is found in the cytoplasm. The catalysed reaction is CMP + ATP = CDP + ADP. It catalyses the reaction dCMP + ATP = dCDP + ADP. This is Cytidylate kinase from Burkholderia multivorans (strain ATCC 17616 / 249).